The sequence spans 156 residues: Small ribosomal subunit protein uS7 (156 aa).

This sequence belongs to the universal ribosomal protein uS7 family. Part of the 30S ribosomal subunit. Contacts proteins S9 and S11.

Its function is as follows. One of the primary rRNA binding proteins, it binds directly to 16S rRNA where it nucleates assembly of the head domain of the 30S subunit. Is located at the subunit interface close to the decoding center, probably blocks exit of the E-site tRNA. This is Small ribosomal subunit protein uS7 from Finegoldia magna (strain ATCC 29328 / DSM 20472 / WAL 2508) (Peptostreptococcus magnus).